A 129-amino-acid polypeptide reads, in one-letter code: Small ribosomal subunit protein uS11 (129 aa).

This sequence belongs to the universal ribosomal protein uS11 family. As to quaternary structure, part of the 30S ribosomal subunit. Interacts with proteins S7 and S18. Binds to IF-3.

Located on the platform of the 30S subunit, it bridges several disparate RNA helices of the 16S rRNA. Forms part of the Shine-Dalgarno cleft in the 70S ribosome. This Sodalis glossinidius (strain morsitans) protein is Small ribosomal subunit protein uS11.